Reading from the N-terminus, the 494-residue chain is UPF0371 protein SPG_0310 (494 aa).

This sequence belongs to the UPF0371 family.

The sequence is that of UPF0371 protein SPG_0310 from Streptococcus pneumoniae serotype 19F (strain G54).